Consider the following 204-residue polypeptide: B9 domain-containing protein 1 (204 aa).

The region spanning 9-127 (FLLMITGQVE…TIPMFVPEST (119 aa)) is the C2 B9-type domain.

Belongs to the B9D family. In terms of assembly, part of the tectonic-like complex (also named B9 complex).

It localises to the cytoplasm. It is found in the cytoskeleton. The protein resides in the cilium basal body. Its function is as follows. Component of the tectonic-like complex, a complex localized at the transition zone of primary cilia and acting as a barrier that prevents diffusion of transmembrane proteins between the cilia and plasma membranes. Required for ciliogenesis and sonic hedgehog/SHH signaling. The polypeptide is B9 domain-containing protein 1 (B9d1) (Mus musculus (Mouse)).